Consider the following 126-residue polypeptide: MYYLKPIGVVEQNENYTVLNIFDEFVEGLDGLKEGDYIIVLVWFHKNDSEEKRKILKVHPRGDINNPLKGVFATRSPYRPNPIGKYTVKIHKIYRNKIFIDKIDAYNETPIIDIKIFSEKLDCPKI.

The region spanning 4 to 126 is the TsaA-like domain; sequence LKPIGVVEQN…FSEKLDCPKI (123 aa). S-adenosyl-L-methionine contacts are provided by residues 45-46, arginine 75, and 106-109; these read HK and YNET.

This sequence belongs to the tRNA methyltransferase O family.

This chain is Probable S-adenosyl-L-methionine-binding protein MJ1583, found in Methanocaldococcus jannaschii (strain ATCC 43067 / DSM 2661 / JAL-1 / JCM 10045 / NBRC 100440) (Methanococcus jannaschii).